Reading from the N-terminus, the 274-residue chain is Acetyl-coenzyme A carboxylase carboxyl transferase subunit beta (274 aa).

The CoA carboxyltransferase N-terminal domain occupies 16–274 (LWTKCEECKN…LLNLLFYKNA (259 aa)). Residues C20, C23, C39, and C42 each contribute to the Zn(2+) site. Residues 20–42 (CEECKNILLAQELETNFYVCPKC) form a C4-type zinc finger.

Belongs to the AccD/PCCB family. As to quaternary structure, acetyl-CoA carboxylase is a heterohexamer composed of biotin carboxyl carrier protein (AccB), biotin carboxylase (AccC) and two subunits each of ACCase subunit alpha (AccA) and ACCase subunit beta (AccD). It depends on Zn(2+) as a cofactor.

It is found in the cytoplasm. It catalyses the reaction N(6)-carboxybiotinyl-L-lysyl-[protein] + acetyl-CoA = N(6)-biotinyl-L-lysyl-[protein] + malonyl-CoA. It functions in the pathway lipid metabolism; malonyl-CoA biosynthesis; malonyl-CoA from acetyl-CoA: step 1/1. Its function is as follows. Component of the acetyl coenzyme A carboxylase (ACC) complex. Biotin carboxylase (BC) catalyzes the carboxylation of biotin on its carrier protein (BCCP) and then the CO(2) group is transferred by the transcarboxylase to acetyl-CoA to form malonyl-CoA. The chain is Acetyl-coenzyme A carboxylase carboxyl transferase subunit beta from Hydrogenobaculum sp. (strain Y04AAS1).